The primary structure comprises 333 residues: Adenosine deaminase (333 aa).

Zn(2+) contacts are provided by His12 and His14. Residues His14, Asp16, and Gly170 each contribute to the substrate site. Position 197 (His197) interacts with Zn(2+). The active-site Proton donor is the Glu200. Position 278 (Asp278) interacts with Zn(2+). Asp279 is a binding site for substrate.

It belongs to the metallo-dependent hydrolases superfamily. Adenosine and AMP deaminases family. Adenosine deaminase subfamily. The cofactor is Zn(2+).

It catalyses the reaction adenosine + H2O + H(+) = inosine + NH4(+). The enzyme catalyses 2'-deoxyadenosine + H2O + H(+) = 2'-deoxyinosine + NH4(+). Its function is as follows. Catalyzes the hydrolytic deamination of adenosine and 2-deoxyadenosine. The sequence is that of Adenosine deaminase from Shigella boydii serotype 4 (strain Sb227).